A 1025-amino-acid chain; its full sequence is Multidrug resistance protein MdtC (1025 aa).

A run of 12 helical transmembrane segments spans residues 3 to 23 (FFALFIYRPVATILLSVAITL), 333 to 353 (EVEQTLIISVALVILVVFLFL), 360 to 380 (IIPAVAVPVSLIGTFAAMYLC), 387 to 407 (LSLMALTIATGFVVDDAIVVL), 431 to 451 (VGFTVLSMSLSLVAVFLPLLL), 463 to 483 (FAVTLSVAIGISLLVSLTLTP), 528 to 548 (LVGVVLLGTIALNIWLYISIP), 853 to 873 (VILIIAAIATVYIVLGILYES), 875 to 895 (VHPLTILSTLPSAGVGALLAL), 897 to 917 (LFNAPFSLIALIGIMLLIGIV), 953 to 973 (PIMMTTLAALFGALPLVLSGG), and 984 to 1004 (ITIVGGLVMSQLLTLYTTPVV).

Belongs to the resistance-nodulation-cell division (RND) (TC 2.A.6) family. MdtC subfamily. As to quaternary structure, part of a tripartite efflux system composed of MdtA, MdtB and MdtC. MdtC forms a heteromultimer with MdtB.

It is found in the cell inner membrane. Functionally, the MdtABC tripartite complex confers resistance against novobiocin and deoxycholate. This chain is Multidrug resistance protein MdtC, found in Escherichia coli (strain 55989 / EAEC).